The sequence spans 386 residues: Succinate--CoA ligase [ADP-forming] subunit beta (386 aa).

4 residues coordinate ATP: Lys46, Glu99, Ala102, and Glu107. Asn199 and Asp213 together coordinate Mg(2+). Residues Asn264 and 321 to 323 (GIM) contribute to the substrate site.

The protein belongs to the succinate/malate CoA ligase beta subunit family. As to quaternary structure, heterotetramer of two alpha and two beta subunits. Mg(2+) serves as cofactor.

The enzyme catalyses succinate + ATP + CoA = succinyl-CoA + ADP + phosphate. The catalysed reaction is GTP + succinate + CoA = succinyl-CoA + GDP + phosphate. It functions in the pathway carbohydrate metabolism; tricarboxylic acid cycle; succinate from succinyl-CoA (ligase route): step 1/1. Functionally, succinyl-CoA synthetase functions in the citric acid cycle (TCA), coupling the hydrolysis of succinyl-CoA to the synthesis of either ATP or GTP and thus represents the only step of substrate-level phosphorylation in the TCA. The beta subunit provides nucleotide specificity of the enzyme and binds the substrate succinate, while the binding sites for coenzyme A and phosphate are found in the alpha subunit. In Orientia tsutsugamushi (strain Ikeda) (Rickettsia tsutsugamushi), this protein is Succinate--CoA ligase [ADP-forming] subunit beta.